The primary structure comprises 101 residues: uncharacterized protein (101 aa).

Residues 68-90 (LAFAFCGRANTFISCFISFASLI) form a helical membrane-spanning segment.

Its subcellular location is the membrane. This is an uncharacterized protein from Saccharomyces cerevisiae (strain ATCC 204508 / S288c) (Baker's yeast).